We begin with the raw amino-acid sequence, 197 residues long: NADH-quinone oxidoreductase subunit C (197 aa).

The protein belongs to the complex I 30 kDa subunit family. As to quaternary structure, NDH-1 is composed of 14 different subunits. Subunits NuoB, C, D, E, F, and G constitute the peripheral sector of the complex.

Its subcellular location is the cell inner membrane. It catalyses the reaction a quinone + NADH + 5 H(+)(in) = a quinol + NAD(+) + 4 H(+)(out). Functionally, NDH-1 shuttles electrons from NADH, via FMN and iron-sulfur (Fe-S) centers, to quinones in the respiratory chain. The immediate electron acceptor for the enzyme in this species is believed to be ubiquinone. Couples the redox reaction to proton translocation (for every two electrons transferred, four hydrogen ions are translocated across the cytoplasmic membrane), and thus conserves the redox energy in a proton gradient. This Rickettsia prowazekii (strain Madrid E) protein is NADH-quinone oxidoreductase subunit C.